The primary structure comprises 204 residues: Urease accessory protein UreG (204 aa).

Position 15-22 (15-22) interacts with GTP; the sequence is GPVGSGKT.

This sequence belongs to the SIMIBI class G3E GTPase family. UreG subfamily. In terms of assembly, homodimer. UreD, UreF and UreG form a complex that acts as a GTP-hydrolysis-dependent molecular chaperone, activating the urease apoprotein by helping to assemble the nickel containing metallocenter of UreC. The UreE protein probably delivers the nickel.

The protein localises to the cytoplasm. Functionally, facilitates the functional incorporation of the urease nickel metallocenter. This process requires GTP hydrolysis, probably effectuated by UreG. The sequence is that of Urease accessory protein UreG from Methylobacterium sp. (strain 4-46).